The sequence spans 261 residues: Kallikrein 1-related peptidase b16 (261 aa).

The N-terminal stretch at 1-18 (MWFLILFLALSLGGIDAA) is a signal peptide. A propeptide spans 19–24 (PPVQSR) (activation peptide). The 234-residue stretch at 25 to 258 (IVGGFKCEKN…FNSWIKDTMM (234 aa)) folds into the Peptidase S1 domain. Cystine bridges form between Cys-31–Cys-173, Cys-50–Cys-66, Cys-152–Cys-219, Cys-184–Cys-198, and Cys-209–Cys-234. The active-site Charge relay system is His-65. Asn-102 is a glycosylation site (N-linked (GlcNAc...) asparagine). Asp-120 acts as the Charge relay system in catalysis. Catalysis depends on Ser-213, which acts as the Charge relay system.

Belongs to the peptidase S1 family. Kallikrein subfamily.

The enzyme catalyses Cleavage of the Leu-|-Leu bond in synthetic tetradecapeptide renin substrate, to produce angiotensin I, but not active on natural angiotensinogen. Also hydrolyzes Bz-Arg-p-nitroanilide.. The protein is Kallikrein 1-related peptidase b16 (Klk1b16) of Mus musculus (Mouse).